A 447-amino-acid chain; its full sequence is GTPase Der (447 aa).

2 EngA-type G domains span residues 4–165 (KIIT…SIKE) and 180–357 (LQIV…KIWN). Residues 10-17 (GRPNVGKS), 57-61 (DTPGL), 119-122 (NKCE), 186-193 (GRPNAGKS), 233-237 (DTAGL), and 298-301 (NKWD) contribute to the GTP site. The KH-like domain occupies 358–443 (KKITTGKLNE…PIRFTYVKNK (86 aa)).

This sequence belongs to the TRAFAC class TrmE-Era-EngA-EngB-Septin-like GTPase superfamily. EngA (Der) GTPase family. As to quaternary structure, associates with the 50S ribosomal subunit.

Functionally, GTPase that plays an essential role in the late steps of ribosome biogenesis. The polypeptide is GTPase Der (Rickettsia typhi (strain ATCC VR-144 / Wilmington)).